Reading from the N-terminus, the 318-residue chain is NADH-ubiquinone oxidoreductase chain 1 (318 aa).

The next 9 helical transmembrane spans lie at F2–L22, P37–I57, L69–M89, L100–G120, V136–M156, H171–A191, E206–A226, E253–I273, and L294–I314.

Belongs to the complex I subunit 1 family.

The protein localises to the mitochondrion inner membrane. The enzyme catalyses a ubiquinone + NADH + 5 H(+)(in) = a ubiquinol + NAD(+) + 4 H(+)(out). Core subunit of the mitochondrial membrane respiratory chain NADH dehydrogenase (Complex I) that is believed to belong to the minimal assembly required for catalysis. Complex I functions in the transfer of electrons from NADH to the respiratory chain. The immediate electron acceptor for the enzyme is believed to be ubiquinone. The sequence is that of NADH-ubiquinone oxidoreductase chain 1 (MT-ND1) from Tolypeutes matacus (Southern three-banded armadillo).